The primary structure comprises 344 residues: Anthranilate phosphoribosyltransferase (344 aa).

Residues G80, 83–84 (GD), T88, 90–93 (NVST), 108–116 (KHGNRSVSS), and S120 contribute to the 5-phospho-alpha-D-ribose 1-diphosphate site. Residue G80 participates in anthranilate binding. S92 contacts Mg(2+). Residue N111 participates in anthranilate binding. Anthranilate is bound at residue R166. Mg(2+) contacts are provided by D225 and E226.

The protein belongs to the anthranilate phosphoribosyltransferase family. Homodimer. Mg(2+) is required as a cofactor.

It catalyses the reaction N-(5-phospho-beta-D-ribosyl)anthranilate + diphosphate = 5-phospho-alpha-D-ribose 1-diphosphate + anthranilate. It functions in the pathway amino-acid biosynthesis; L-tryptophan biosynthesis; L-tryptophan from chorismate: step 2/5. In terms of biological role, catalyzes the transfer of the phosphoribosyl group of 5-phosphorylribose-1-pyrophosphate (PRPP) to anthranilate to yield N-(5'-phosphoribosyl)-anthranilate (PRA). This chain is Anthranilate phosphoribosyltransferase, found in Legionella pneumophila (strain Paris).